Consider the following 396-residue polypeptide: S-adenosylmethionine synthase 1 (396 aa).

A Mg(2+)-binding site is contributed by Glu-13. His-19 contacts ATP. Position 47 (Glu-47) interacts with K(+). L-methionine-binding residues include Glu-60 and Gln-103. ATP-binding positions include 171–173 (DGK), 239–242 (SGRF), Asp-250, 256–257 (RK), Ala-273, Lys-277, and Lys-281. Asp-250 contributes to the L-methionine binding site. Lys-281 provides a ligand contact to L-methionine.

The protein belongs to the AdoMet synthase family. Homotetramer. Mn(2+) is required as a cofactor. The cofactor is Mg(2+). Requires Co(2+) as cofactor. It depends on K(+) as a cofactor.

The protein resides in the cytoplasm. The catalysed reaction is L-methionine + ATP + H2O = S-adenosyl-L-methionine + phosphate + diphosphate. It functions in the pathway amino-acid biosynthesis; S-adenosyl-L-methionine biosynthesis; S-adenosyl-L-methionine from L-methionine: step 1/1. Its function is as follows. Catalyzes the formation of S-adenosylmethionine from methionine and ATP. The reaction comprises two steps that are both catalyzed by the same enzyme: formation of S-adenosylmethionine (AdoMet) and triphosphate, and subsequent hydrolysis of the triphosphate. May be involved in the synthesis of betain in response to abiotic stress such as high salinity. This chain is S-adenosylmethionine synthase 1 (SAMS1), found in Beta vulgaris (Sugar beet).